Reading from the N-terminus, the 772-residue chain is Cellulosomal-scaffolding protein B (772 aa).

One can recognise a Cohesin 1 domain in the interval 1–80 (DPSKSFDSAI…TTFVAGGVNL (80 aa)). The linker (Pro/Thr-rich) stretch occupies residues 81–93 (GSSVPTTQPNVPS). The Cohesin 2 domain maps to 94 to 240 (DGVVVEIGKV…VNVGNATPTK (147 aa)). Positions 235–276 (NATPTKGATPTNTATPTKSATATPPGHSVPTNTPTNTPANTP) are enriched in low complexity. Disordered regions lie at residues 235–277 (NATP…NTPV) and 438–464 (VVPS…PSDD). Positions 241-272 (GATPTNTATPTKSATATPPGHSVPTNTPTNTP) are linker (Pro/Thr-rich). One can recognise a CBM3 domain in the interval 277–435 (VSGNLKVEFY…GVLVWGKEPG (159 aa)). The segment covering 438–461 (VVPSTQPVTTPPATTKPPATTIPP) has biased composition (low complexity). Residues 440–461 (PSTQPVTTPPATTKPPATTIPP) are linker (Pro/Thr-rich). The region spanning 462–607 (SDDPNAIKIK…ETDLINGGVL (146 aa)) is the Cohesin 3 domain. A Dockerin domain is found at 704-771 (IMMWVGDIVK…FGATSSDYDA (68 aa)).

In terms of processing, O-glycosylated on most but not all Thr residues of the linker units.

Its subcellular location is the secreted. Functionally, acts as a scaffolding protein in the cellulosome. It promotes binding of cellulose to the catalytic domains of the cellulolytic enzymes probably through the binding of the nine repeated domains with dockerin domains present in catalytic subunits of the cellulosome. This Acetivibrio thermocellus (Hungateiclostridium thermocellum) protein is Cellulosomal-scaffolding protein B (cipB).